Consider the following 377-residue polypeptide: DNA replication and repair protein RecF (377 aa).

Residue 30 to 37 (GPNGQGKT) participates in ATP binding.

The protein belongs to the RecF family.

The protein localises to the cytoplasm. Functionally, the RecF protein is involved in DNA metabolism; it is required for DNA replication and normal SOS inducibility. RecF binds preferentially to single-stranded, linear DNA. It also seems to bind ATP. The polypeptide is DNA replication and repair protein RecF (Thermobifida fusca (strain YX)).